The following is a 313-amino-acid chain: Methionyl-tRNA formyltransferase (313 aa).

A disordered region spans residues 32 to 51 (QPDRRKGRGKELQPPPAKRK). Position 109–112 (109–112 (SLLP)) interacts with (6S)-5,6,7,8-tetrahydrofolate.

It belongs to the Fmt family.

The enzyme catalyses L-methionyl-tRNA(fMet) + (6R)-10-formyltetrahydrofolate = N-formyl-L-methionyl-tRNA(fMet) + (6S)-5,6,7,8-tetrahydrofolate + H(+). Its function is as follows. Attaches a formyl group to the free amino group of methionyl-tRNA(fMet). The formyl group appears to play a dual role in the initiator identity of N-formylmethionyl-tRNA by promoting its recognition by IF2 and preventing the misappropriation of this tRNA by the elongation apparatus. The polypeptide is Methionyl-tRNA formyltransferase (Natranaerobius thermophilus (strain ATCC BAA-1301 / DSM 18059 / JW/NM-WN-LF)).